Reading from the N-terminus, the 358-residue chain is Peptide chain release factor 1 (358 aa).

The residue at position 233 (Gln233) is an N5-methylglutamine.

The protein belongs to the prokaryotic/mitochondrial release factor family. Post-translationally, methylated by PrmC. Methylation increases the termination efficiency of RF1.

Its subcellular location is the cytoplasm. In terms of biological role, peptide chain release factor 1 directs the termination of translation in response to the peptide chain termination codons UAG and UAA. The polypeptide is Peptide chain release factor 1 (Listeria monocytogenes serovar 1/2a (strain ATCC BAA-679 / EGD-e)).